An 88-amino-acid chain; its full sequence is Small ribosomal subunit protein uS17 (88 aa).

This sequence belongs to the universal ribosomal protein uS17 family. As to quaternary structure, part of the 30S ribosomal subunit.

One of the primary rRNA binding proteins, it binds specifically to the 5'-end of 16S ribosomal RNA. This is Small ribosomal subunit protein uS17 from Nitratidesulfovibrio vulgaris (strain ATCC 29579 / DSM 644 / CCUG 34227 / NCIMB 8303 / VKM B-1760 / Hildenborough) (Desulfovibrio vulgaris).